The primary structure comprises 238 residues: Probable transcriptional regulatory protein HH_1604 (238 aa).

Belongs to the TACO1 family.

Its subcellular location is the cytoplasm. The protein is Probable transcriptional regulatory protein HH_1604 of Helicobacter hepaticus (strain ATCC 51449 / 3B1).